The chain runs to 1548 residues: UDP-glucose:glycoprotein glucosyltransferase (1548 aa).

The signal sequence occupies residues 1 to 22 (MLRAVALCVSVVLIALYTPTSG). The N-linked (GlcNAc...) asparagine glycan is linked to Asn181. The segment covering 243 to 253 (TEYKSQDDAPK) has biased composition (basic and acidic residues). Residues 243–265 (TEYKSQDDAPKPEAGSTSDEDLA) are disordered. Asn266 and Asn864 each carry an N-linked (GlcNAc...) asparagine glycan. The glucosyltransferase stretch occupies residues 1227–1548 (SANQAATDED…PSHEPKHGEL (322 aa)). Basic and acidic residues predominate over residues 1512–1523 (EDHENSHSRDSA). The tract at residues 1512–1548 (EDHENSHSRDSAVDDSVDDSVEVTTVTPSHEPKHGEL) is disordered. A Prevents secretion from ER motif is present at residues 1545–1548 (HGEL).

The protein belongs to the glycosyltransferase 8 family. Monomer. May interact with CG7484/Sep15. It depends on Ca(2+) as a cofactor. Mn(2+) serves as cofactor.

The protein localises to the endoplasmic reticulum lumen. It localises to the endoplasmic reticulum-Golgi intermediate compartment. The catalysed reaction is N(4)-(alpha-D-Man-(1-&gt;2)-alpha-D-Man-(1-&gt;2)-alpha-D-Man-(1-&gt;3)-[alpha-D-Man-(1-&gt;2)-alpha-D-Man-(1-&gt;3)-[alpha-D-Man-(1-&gt;2)-alpha-D-Man-(1-&gt;6)]-alpha-D-Man-(1-&gt;6)]-beta-D-Man-(1-&gt;4)-beta-D-GlcNAc-(1-&gt;4)-beta-D-GlcNAc)-L-asparaginyl-[protein] (N-glucan mannose isomer 9A1,2,3B1,2,3) + UDP-alpha-D-glucose = N(4)-(alpha-D-Glc-(1-&gt;3)-alpha-D-Man-(1-&gt;2)-alpha-D-Man-(1-&gt;2)-alpha-D-Man-(1-&gt;3)-[alpha-D-Man-(1-&gt;2)-alpha-D-Man-(1-&gt;3)-[alpha-D-Man-(1-&gt;2)-alpha-D-Man-(1-&gt;6)]-alpha-D-Man-(1-&gt;6)]-beta-D-Man-(1-&gt;4)-beta-D-GlcNAc-(1-&gt;4)-beta-D-GlcNAc)-L-asparaginyl-[protein] + UDP + H(+). It participates in protein modification; protein glycosylation. Recognizes glycoproteins with minor folding defects. Reglucosylates single N-glycans near the misfolded part of the protein, thus providing quality control for protein folding in the endoplasmic reticulum. Reglucosylated proteins are recognized by calreticulin for recycling to the endoplasmic reticulum and refolding or degradation. The chain is UDP-glucose:glycoprotein glucosyltransferase from Drosophila melanogaster (Fruit fly).